Consider the following 210-residue polypeptide: NAD(P)H-quinone oxidoreductase subunit I (210 aa).

2 consecutive 4Fe-4S ferredoxin-type domains span residues 54 to 83 (GRIHFEFDKCIACEICVRVCPIDLPVVDWV) and 94 to 123 (YSYSIDFGVCIFCANCVEFCPTNCLSVTED). The [4Fe-4S] cluster site is built by C63, C66, C69, C73, C103, C106, C109, and C113.

It belongs to the complex I 23 kDa subunit family. As to quaternary structure, NDH-1 is composed of at least 11 different subunits. [4Fe-4S] cluster serves as cofactor.

It is found in the cellular thylakoid membrane. The catalysed reaction is a plastoquinone + NADH + (n+1) H(+)(in) = a plastoquinol + NAD(+) + n H(+)(out). It carries out the reaction a plastoquinone + NADPH + (n+1) H(+)(in) = a plastoquinol + NADP(+) + n H(+)(out). In terms of biological role, NDH-1 shuttles electrons from an unknown electron donor, via FMN and iron-sulfur (Fe-S) centers, to quinones in the respiratory and/or the photosynthetic chain. The immediate electron acceptor for the enzyme in this species is believed to be plastoquinone. Couples the redox reaction to proton translocation, and thus conserves the redox energy in a proton gradient. In Synechococcus sp. (strain JA-3-3Ab) (Cyanobacteria bacterium Yellowstone A-Prime), this protein is NAD(P)H-quinone oxidoreductase subunit I.